The primary structure comprises 276 residues: MKTGMFTCGHQRLPIEHAFRDASELGYDGIEIWGGRPHAFAPDLKAGGIKQIKALAQTYQMPIIGYTPETNGYPYNMMLGDEHMRRESLDMIKLAIDMAKEMNAGYTLISAAHAGYLTPPNVIWGRLAENLSELCEYAENIGMDLILEPLTPYESNVVCNANDVLHALALVPSPRLFSMVDICAPYVQAEPVMSYFDKLGDKLRHLHIVDSDGASDTHYIPGEGKMPLRELMRDIIDRGYEGYSTVELVTMYMNEPRLYARQALERFRALLPEDER.

The Proton donor/acceptor role is filled by glutamate 148. A divalent metal cation contacts are provided by glutamate 148, aspartate 181, histidine 207, and glutamate 247. Catalysis depends on glutamate 247, which acts as the Proton donor/acceptor.

The protein belongs to the FrlC family. In terms of assembly, homooctamer. The cofactor is a divalent metal cation.

The catalysed reaction is N(6)-(D-psicosyl)-L-lysine = N(6)-(D-fructosyl)-L-lysine. Catalyzes the reversible interconversion of fructoselysine with its C-3 epimer, psicoselysine. May allow S.flexneri to utilize psicoselysine for growth. The sequence is that of Fructoselysine 3-epimerase (frlC) from Shigella flexneri.